The primary structure comprises 294 residues: Elongation factor Ts (294 aa).

The segment at 81 to 84 (TDFV) is involved in Mg(2+) ion dislocation from EF-Tu.

It belongs to the EF-Ts family.

Its subcellular location is the cytoplasm. Associates with the EF-Tu.GDP complex and induces the exchange of GDP to GTP. It remains bound to the aminoacyl-tRNA.EF-Tu.GTP complex up to the GTP hydrolysis stage on the ribosome. The polypeptide is Elongation factor Ts (Levilactobacillus brevis (strain ATCC 367 / BCRC 12310 / CIP 105137 / JCM 1170 / LMG 11437 / NCIMB 947 / NCTC 947) (Lactobacillus brevis)).